We begin with the raw amino-acid sequence, 716 residues long: MDGYQNFLPIPPENNTWLLLLDDFSQLQQQQQQQQQQQQQQQQQQQQQQQQQQQQQQQQQQQQQQQQQQQQQFPQQYTNDGINVQSIESNNYLNNNNFNFNERLESLQKQQQEQQTQIQQQLQNYQQQYQDQYQQRQQQYQDQYQKPYELPSQYIDQCNQIFSNYNNNNNITSINYNMNNNNNSNNSNNNSNNNNNNNNNNNNNNNNNNNNNNNNNNNNNNNNNNKTTDNINNVNSINNLNNINLGANNVNNNVNSNVVSNVNNNAISQNKPIFPPFNDNPINIQQQQQQQQQQECYKIPQYKISLDNTNNPIITPTITPTLTTFPTITPTLITPTTIAPITPTPTPTPILTTTTTKTTKINLEETNEKTKIINETKKQEKSTESIKKMNQNKASRNYRQKKKDYIKEIEDKLSLLEMENSKIQKENQTLRKTGSVDLMKPSNDIMKMMTDCKTITNQLKLSLERNDDRSLIYLLHQYHRVIEERYSHIEYEAEKVANPYVQLRLSIVGYTPGQFCPFVLNIFNDNNDDGDNQKVTNDHNWYNTFKKEANITPEQSNKLDSIRFQHTKVSASMFKEIQMLDLEIKSFFYKFIFSYPSDPLSSLNPTELVYNSTTTTPIDSYSLPAIDKQLELAGKLESLKNKLTLNGGLMLDTFSSISSLLTPRQEAIFLVGVDPYAFINFSHFDIINDVWSNIINKPFSGPVHMAQSLNKMFNHS.

Positions 20 to 142 form a coiled coil; that stretch reads LLDDFSQLQQ…YQQRQQQYQD (123 aa). Residues 173-233 are disordered; it reads SINYNMNNNN…NNKTTDNINN (61 aa). Residues 381–444 enclose the bZIP domain; sequence KSTESIKKMN…SVDLMKPSND (64 aa). A basic motif region spans residues 387 to 403; sequence KKMNQNKASRNYRQKKK. The leucine-zipper stretch occupies residues 406 to 413; sequence IKEIEDKL.

The protein belongs to the bZIP family.

It is found in the nucleus. Its function is as follows. Probable transcriptional regulator. This chain is Probable basic-leucine zipper transcription factor O (bzpO), found in Dictyostelium discoideum (Social amoeba).